A 183-amino-acid polypeptide reads, in one-letter code: dCTP deaminase (183 aa).

Residues 97–102 and aspartate 113 contribute to the dCTP site; that span reads RSSFAR. Glutamate 123 serves as the catalytic Proton donor/acceptor. DCTP contacts are provided by tyrosine 155 and glutamine 162.

It belongs to the dCTP deaminase family. Homotrimer.

The enzyme catalyses dCTP + H2O + H(+) = dUTP + NH4(+). It participates in pyrimidine metabolism; dUMP biosynthesis; dUMP from dCTP (dUTP route): step 1/2. Catalyzes the deamination of dCTP to dUTP. The sequence is that of dCTP deaminase from Sulfurisphaera tokodaii (strain DSM 16993 / JCM 10545 / NBRC 100140 / 7) (Sulfolobus tokodaii).